Here is a 394-residue protein sequence, read N- to C-terminus: Probable pectate lyase 16 (394 aa).

A signal peptide spans 1–22; sequence MTLFTVSCLLVVLFLCHSLVHA. Residues aspartate 192, aspartate 216, and aspartate 220 each coordinate Ca(2+). Residue arginine 272 is part of the active site.

This sequence belongs to the polysaccharide lyase 1 family. Ca(2+) is required as a cofactor.

The enzyme catalyses Eliminative cleavage of (1-&gt;4)-alpha-D-galacturonan to give oligosaccharides with 4-deoxy-alpha-D-galact-4-enuronosyl groups at their non-reducing ends.. It functions in the pathway glycan metabolism; pectin degradation; 2-dehydro-3-deoxy-D-gluconate from pectin: step 2/5. The chain is Probable pectate lyase 16 from Arabidopsis thaliana (Mouse-ear cress).